The primary structure comprises 368 residues: Polymerase delta-interacting protein 2 (368 aa).

The N-terminal 21 residues, 1–21, are a transit peptide targeting the mitochondrion; that stretch reads MAGCVARRALAVGSRWWSRSL. Positions 235–360 constitute an ApaG domain; the sequence is RETTENIRVT…FSLESNKDEK (126 aa). Phosphothreonine is present on Thr292.

Interacts with PCNA and POLD2. Interacts with SSBP1. Interacts with PRIMPOL; leading to enhance DNA polymerase activity of PRIMPOL. Interacts with POLH. Interacts with POLD1; leading to stimulate DNA polymerase activity of POLD1.

The protein localises to the mitochondrion matrix. It localises to the nucleus. Its function is as follows. Involved in DNA damage tolerance by regulating translesion synthesis (TLS) of templates carrying DNA damage lesions such as 8oxoG and abasic sites. May act by stimulating activity of DNA polymerases involved in TLS, such as PRIMPOL and polymerase delta (POLD1). In Mus musculus (Mouse), this protein is Polymerase delta-interacting protein 2.